A 514-amino-acid polypeptide reads, in one-letter code: Intracellular exo-alpha-L-arabinofuranosidase (514 aa).

Residues Glu47 and Asn194 each coordinate alpha-L-arabinofuranose. Catalysis depends on Glu195, which acts as the Proton donor/acceptor. Positions 261, 317, and 366 each coordinate alpha-L-arabinofuranose. Glu317 serves as the catalytic Nucleophile.

The protein belongs to the glycosyl hydrolase 51 family. Homohexamer; trimer of dimers.

The protein localises to the cytoplasm. It catalyses the reaction Hydrolysis of terminal non-reducing alpha-L-arabinofuranoside residues in alpha-L-arabinosides.. The protein operates within glycan metabolism; L-arabinan degradation. Functionally, involved in the degradation of arabinan and is a key enzyme in the complete degradation of the plant cell wall. Catalyzes the cleavage of terminal alpha-L-arabinofuranosyl residues in different hemicellulosic homopolysaccharides (branched and debranched arabinans) and heteropolysaccharides (arabinoxylans). The polypeptide is Intracellular exo-alpha-L-arabinofuranosidase (asdII) (Bacteroides ovatus).